Reading from the N-terminus, the 513-residue chain is Histidine ammonia-lyase (513 aa).

A cross-link (5-imidazolinone (Ala-Gly)) is located at residues 142–144 (ASG). 2,3-didehydroalanine (Ser) is present on S143.

This sequence belongs to the PAL/histidase family. Contains an active site 4-methylidene-imidazol-5-one (MIO), which is formed autocatalytically by cyclization and dehydration of residues Ala-Ser-Gly.

The protein resides in the cytoplasm. It carries out the reaction L-histidine = trans-urocanate + NH4(+). It participates in amino-acid degradation; L-histidine degradation into L-glutamate; N-formimidoyl-L-glutamate from L-histidine: step 1/3. This chain is Histidine ammonia-lyase, found in Mesorhizobium japonicum (strain LMG 29417 / CECT 9101 / MAFF 303099) (Mesorhizobium loti (strain MAFF 303099)).